The chain runs to 872 residues: Alanine--tRNA ligase (872 aa).

Histidine 567, histidine 571, cysteine 669, and histidine 673 together coordinate Zn(2+).

The protein belongs to the class-II aminoacyl-tRNA synthetase family. Zn(2+) is required as a cofactor.

The protein resides in the cytoplasm. It carries out the reaction tRNA(Ala) + L-alanine + ATP = L-alanyl-tRNA(Ala) + AMP + diphosphate. Functionally, catalyzes the attachment of alanine to tRNA(Ala) in a two-step reaction: alanine is first activated by ATP to form Ala-AMP and then transferred to the acceptor end of tRNA(Ala). Also edits incorrectly charged Ser-tRNA(Ala) and Gly-tRNA(Ala) via its editing domain. The chain is Alanine--tRNA ligase from Streptococcus pneumoniae (strain Hungary19A-6).